The sequence spans 429 residues: MSGDIIDELTWRGLIAQSTDLDALRAALAAGPLTLYAGFDPTAASLHAGHLVPLLALKRFQRAGHRPIVLAGGATGLIGDPRDVGERTMNSSDTVAEWARRIRSQLERFVDLDDSPTGAVIVNNMDWTGPLSAVDFLRDIGKHFSVNVMLARDTVKRRLEGDGMSYTEFSYMLLQANDYVQLRRSFGCRLQVGGSDQWGNIIAGVELNRRLDGESVHALTVPLVTSADGKKFGKSTGGGSLWLDPEMTSPYAWYQYFVNTADADVVRYLRWFTFLDREELAELERATAERPHAREAQRRLAAEMTTLVHGEQHTRAVQLASQALFGRGDLRELDEATLGAALREAAGEGEVARVTPGEPATIVDLLVATGLAESRGAARRTVNEGGAAVNNQKIADPDWTPADGDYLHGRWLVVRRGKRNMAGVLRDGN.

Tyrosine 36 provides a ligand contact to L-tyrosine. The 'HIGH' region signature appears at 41–50; the sequence is PTAASLHAGH. 2 residues coordinate L-tyrosine: tyrosine 171 and glutamine 175. The 'KMSKS' region signature appears at 231–235; the sequence is KFGKS. Position 234 (lysine 234) interacts with ATP. Residues 360-417 enclose the S4 RNA-binding domain; sequence ATIVDLLVATGLAESRGAARRTVNEGGAAVNNQKIADPDWTPADGDYLHGRWLVVRRG.

The protein belongs to the class-I aminoacyl-tRNA synthetase family. TyrS type 1 subfamily. As to quaternary structure, homodimer.

It is found in the cytoplasm. It catalyses the reaction tRNA(Tyr) + L-tyrosine + ATP = L-tyrosyl-tRNA(Tyr) + AMP + diphosphate + H(+). In terms of biological role, catalyzes the attachment of tyrosine to tRNA(Tyr) in a two-step reaction: tyrosine is first activated by ATP to form Tyr-AMP and then transferred to the acceptor end of tRNA(Tyr). This is Tyrosine--tRNA ligase from Nocardia farcinica (strain IFM 10152).